The primary structure comprises 291 residues: N-acetylmannosamine kinase (291 aa).

Residues 5–12 (AIDIGGTK) and 132–139 (GVGGGVVS) contribute to the ATP site. H156, C166, C168, and C173 together coordinate Zn(2+).

Belongs to the ROK (NagC/XylR) family. NanK subfamily. In terms of assembly, homodimer.

It catalyses the reaction an N-acyl-D-mannosamine + ATP = an N-acyl-D-mannosamine 6-phosphate + ADP + H(+). It functions in the pathway amino-sugar metabolism; N-acetylneuraminate degradation; D-fructose 6-phosphate from N-acetylneuraminate: step 2/5. Functionally, catalyzes the phosphorylation of N-acetylmannosamine (ManNAc) to ManNAc-6-P. The sequence is that of N-acetylmannosamine kinase from Escherichia coli O157:H7.